We begin with the raw amino-acid sequence, 309 residues long: SUR7 family protein FMP45 (309 aa).

The Cytoplasmic segment spans residues 1 to 5 (MIFKR). Residues 6–26 (FVNLLVFLFLLGAGLLTFFLI) traverse the membrane as a helical segment. Topologically, residues 27–116 (LSGGRESGTL…YYLSRVGWAM (90 aa)) are extracellular. The N-linked (GlcNAc...) asparagine glycan is linked to Asn-73. Residues 117–137 (LLISLFFIVLALVPGFLATFL) traverse the membrane as a helical segment. Topologically, residues 138–140 (PFK) are cytoplasmic. A helical membrane pass occupies residues 141 to 161 (AVPVLYCVLSWLAFFFIILAA). Residues 162–188 (CLYTGCYVKARKTFRNSGRSARLGPKN) are Extracellular-facing. A helical membrane pass occupies residues 189-209 (FAFIWTSVFLMLVNAIWSTIF). The Cytoplasmic portion of the chain corresponds to 210–309 (SATHKAHSTY…GLAGPVTVRD (100 aa)). 2 positions are modified to phosphoserine: Ser-230 and Ser-232. Residue Thr-235 is modified to Phosphothreonine. The disordered stretch occupies residues 253-309 (GPITAAPVVGQPQPTTTTTPAGNGKFFQKLKTRKQVPSAELEPAGDGGLAGPVTVRD). A compositionally biased stretch (low complexity) spans 258–274 (APVVGQPQPTTTTTPAG).

Belongs to the SUR7 family.

It localises to the cell membrane. Functionally, involved in sporulation and affects the sphingolipid composition of the plasma membrane. The polypeptide is SUR7 family protein FMP45 (FMP45) (Saccharomyces cerevisiae (strain ATCC 204508 / S288c) (Baker's yeast)).